Consider the following 393-residue polypeptide: Glutamyl-tRNA reductase (393 aa).

Residues 47 to 50 (TCGR), S98, 103 to 105 (ETD), and Q109 each bind substrate. C48 functions as the Nucleophile in the catalytic mechanism. 177-182 (GAGAVG) contributes to the NADP(+) binding site.

The protein belongs to the glutamyl-tRNA reductase family. In terms of assembly, homodimer.

The catalysed reaction is (S)-4-amino-5-oxopentanoate + tRNA(Glu) + NADP(+) = L-glutamyl-tRNA(Glu) + NADPH + H(+). Its pathway is porphyrin-containing compound metabolism; protoporphyrin-IX biosynthesis; 5-aminolevulinate from L-glutamyl-tRNA(Glu): step 1/2. Its function is as follows. Catalyzes the NADPH-dependent reduction of glutamyl-tRNA(Glu) to glutamate 1-semialdehyde (GSA). The sequence is that of Glutamyl-tRNA reductase from Pyrobaculum islandicum (strain DSM 4184 / JCM 9189 / GEO3).